The sequence spans 181 residues: Ankyrin repeat-containing protein YGL242C (181 aa).

M1 is modified (N-acetylmethionine). 2 ANK repeats span residues 49 to 78 (LGNTALHLCCKYGSWEVLDKILDQDGEIEI) and 85 to 120 (DGDTPLHVTVRYSQEEPEHGTFIARNLIEVGADPRV). The disordered stretch occupies residues 151–181 (IDSTNGSGDNNEDGEMIDDGPSDDDEEDDKK). Positions 160–181 (NNEDGEMIDDGPSDDDEEDDKK) are enriched in acidic residues. Phosphoserine is present on S172.

The sequence is that of Ankyrin repeat-containing protein YGL242C from Saccharomyces cerevisiae (strain ATCC 204508 / S288c) (Baker's yeast).